A 134-amino-acid polypeptide reads, in one-letter code: MSWQAYVDDHLMCDIEGHEGHRLTAAAIVGHDGSVWAQSATFPQFKPEEMNGIMTDFNEPGHLAPTGLHLGGTKYMVIQGEAGAVIRGKKGSGGITIKKTGQALVCGIYEEPVTPGQCNMVVERLGDYLLEQGM.

C13 and C118 are oxidised to a cystine. Residues 84–100 (AVIRGKKGSGGITIKKT) carry the Involved in PIP2 interaction motif. Phosphothreonine is present on T114.

The protein belongs to the profilin family. Occurs in many kinds of cells as a complex with monomeric actin in a 1:1 ratio. In terms of processing, phosphorylated by MAP kinases.

It localises to the cytoplasm. Its subcellular location is the cytoskeleton. Functionally, binds to actin and affects the structure of the cytoskeleton. At high concentrations, profilin prevents the polymerization of actin, whereas it enhances it at low concentrations. This is Profilin-2 from Olea europaea (Common olive).